The primary structure comprises 480 residues: Cysteine--tRNA ligase (480 aa).

Zn(2+) is bound at residue cysteine 27. The 'HIGH' region signature appears at 29–39 (PTVYNYAHIGN). Residues cysteine 221, histidine 246, and glutamate 250 each contribute to the Zn(2+) site. The 'KMSKS' region signature appears at 278-282 (KMSKS). Lysine 281 is an ATP binding site.

The protein belongs to the class-I aminoacyl-tRNA synthetase family. In terms of assembly, monomer. Zn(2+) is required as a cofactor.

It localises to the cytoplasm. The catalysed reaction is tRNA(Cys) + L-cysteine + ATP = L-cysteinyl-tRNA(Cys) + AMP + diphosphate. This chain is Cysteine--tRNA ligase, found in Borreliella afzelii (strain PKo) (Borrelia afzelii).